A 243-amino-acid polypeptide reads, in one-letter code: Ras-related protein Rab-12 (243 aa).

Residue methionine 1 is modified to N-acetylmethionine. The segment at 1–36 (MDPSAALHRRPAGGGLGAVSPALSGGQARRRKQPPR) is disordered. Serine 20 and serine 24 each carry phosphoserine. GTP-binding residues include glycine 51, valine 52, glycine 53, lysine 54, threonine 55, serine 72, and threonine 73. Threonine 55 is a Mg(2+) binding site. Short sequence motifs (switch) lie at residues 64–78 (DTFCEACKSTVGVDF) and 96–113 (DTAGQERFNSITSAYYRS). Threonine 73 and aspartate 96 together coordinate Mg(2+). Position 99 (glycine 99) interacts with GTP. The residue at position 105 (serine 105) is a Phosphoserine. Asparagine 154, lysine 155, aspartate 157, serine 185, alanine 186, and lysine 187 together coordinate GTP. Residues cysteine 242 and cysteine 243 are each lipidated (S-geranylgeranyl cysteine).

Belongs to the small GTPase superfamily. Rab family. In terms of assembly, interacts with RABIF and OPTN. Interacts with LRRK2; interaction facilitates phosphorylation of Ser-105. Interacts with GDI1, GDI2 and CHM; these interactions are disrupted by phosphorylation on Ser-105. Interacts with RILPL1 and RILPL2; these interactions are dependent on phosphorylation of Ser-105. It depends on Mg(2+) as a cofactor. Post-translationally, phosphorylation of Ser-105 in the switch II region by LRRK2 prevents the association of RAB regulatory proteins, including CHM and RAB GDP dissociation inhibitors GDI1 and GDI2. In terms of tissue distribution, highest levels in skeletal and cardiac muscle. Also found in comparable amounts in brain, spinal cord and lung. Also detected in testis where it is expressed by Sertoli cells of the seminiferous tubules (at protein level).

The protein localises to the recycling endosome membrane. The protein resides in the lysosome membrane. Its subcellular location is the golgi apparatus membrane. It is found in the cytoplasmic vesicle. It localises to the autophagosome. It catalyses the reaction GTP + H2O = GDP + phosphate + H(+). Regulated by guanine nucleotide exchange factors (GEFs) including DENND3 which promote the exchange of bound GDP for free GTP. Regulated by GTPase activating proteins (GAPs) which increase the GTP hydrolysis activity. Inhibited by GDP dissociation inhibitors (GDIs). Functionally, the small GTPases Rab are key regulators of intracellular membrane trafficking, from the formation of transport vesicles to their fusion with membranes. Rabs cycle between an inactive GDP-bound form and an active GTP-bound form that is able to recruit to membranes different sets of downstream effectors directly responsible for vesicle formation, movement, tethering and fusion. RAB12 may play a role in protein transport from recycling endosomes to lysosomes regulating, for instance, the degradation of the transferrin receptor. Involved in autophagy. The protein is Ras-related protein Rab-12 of Rattus norvegicus (Rat).